Here is a 206-residue protein sequence, read N- to C-terminus: Urease accessory protein UreG (206 aa).

12 to 19 (GPVGSGKT) serves as a coordination point for GTP.

The protein belongs to the SIMIBI class G3E GTPase family. UreG subfamily. As to quaternary structure, homodimer. UreD, UreF and UreG form a complex that acts as a GTP-hydrolysis-dependent molecular chaperone, activating the urease apoprotein by helping to assemble the nickel containing metallocenter of UreC. The UreE protein probably delivers the nickel.

The protein resides in the cytoplasm. In terms of biological role, facilitates the functional incorporation of the urease nickel metallocenter. This process requires GTP hydrolysis, probably effectuated by UreG. This chain is Urease accessory protein UreG, found in Synechocystis sp. (strain ATCC 27184 / PCC 6803 / Kazusa).